A 442-amino-acid chain; its full sequence is tRNA-2-methylthio-N(6)-dimethylallyladenosine synthase (442 aa).

An MTTase N-terminal domain is found at 5 to 122 (KRIFIKTFGC…LPDMIESKRR (118 aa)). The [4Fe-4S] cluster site is built by cysteine 14, cysteine 51, cysteine 85, cysteine 159, cysteine 163, and cysteine 166. The 233-residue stretch at 145–377 (RVEGAAAFLS…QALNEAQGKA (233 aa)) folds into the Radical SAM core domain. The TRAM domain occupies 380 to 442 (ASMVGSIQRV…LSHTLRGELV (63 aa)).

This sequence belongs to the methylthiotransferase family. MiaB subfamily. Monomer. The cofactor is [4Fe-4S] cluster.

It is found in the cytoplasm. It catalyses the reaction N(6)-dimethylallyladenosine(37) in tRNA + (sulfur carrier)-SH + AH2 + 2 S-adenosyl-L-methionine = 2-methylsulfanyl-N(6)-dimethylallyladenosine(37) in tRNA + (sulfur carrier)-H + 5'-deoxyadenosine + L-methionine + A + S-adenosyl-L-homocysteine + 2 H(+). Catalyzes the methylthiolation of N6-(dimethylallyl)adenosine (i(6)A), leading to the formation of 2-methylthio-N6-(dimethylallyl)adenosine (ms(2)i(6)A) at position 37 in tRNAs that read codons beginning with uridine. In Methylobacillus flagellatus (strain ATCC 51484 / DSM 6875 / VKM B-1610 / KT), this protein is tRNA-2-methylthio-N(6)-dimethylallyladenosine synthase.